The sequence spans 78 residues: MTFLLLLVSVCMMATGEERTKRDVCELPFEEGPCFAAIRVYAYNAETGDCEQLTYGGCEGNGNRFATLEDCDNACARY.

Residues 1-16 (MTFLLLLVSVCMMATG) form the signal peptide. Residues 17–20 (EERT) constitute a propeptide that is removed on maturation. A BPTI/Kunitz inhibitor domain is found at 25–75 (CELPFEEGPCFAAIRVYAYNAETGDCEQLTYGGCEGNGNRFATLEDCDNAC). Cystine bridges form between cysteine 25–cysteine 75, cysteine 34–cysteine 58, and cysteine 50–cysteine 71.

The protein belongs to the venom Kunitz-type family. In terms of tissue distribution, expressed by the venom duct.

It localises to the secreted. This is Kunitz-type serine protease inhibitor conotoxin Cal9.1a from Californiconus californicus (California cone).